The chain runs to 86 residues: Secreted transmembrane peptide 6 (86 aa).

The first 31 residues, 1–31 (MGMKSPNIAAFMLPLLLILFTLSSQLKVVES), serve as a signal peptide directing secretion. The short motif at 45–58 (IVYTPPSRSCGTSP) is the SCOOP motif element. Residues 51 to 53 (SRS) carry the SxS motif essential for MIK2 binding motif.

This sequence belongs to the serine rich endogenous peptide (SCOOP) phytocytokine family. In terms of assembly, interacts with MIK2 (via extracellular leucine-rich repeat domain); this interaction triggers the formation of complex between MIK2 and the BAK1/SERK3 and SERK4 coreceptors, and subsequent BAK1 activation by phosphorylation. In terms of tissue distribution, mostly expressed in leaves, and, to a lower extent, in roots, stems, siliques, seeds and flowers.

The protein localises to the cell membrane. It localises to the secreted. Its subcellular location is the extracellular space. It is found in the apoplast. Brassicaceae-specific phytocytokine (plant endogenous peptide released into the apoplast) perceived by MIK2 in a BAK1/SERK3 and SERK4 coreceptors-dependent manner, that modulates various physiological and antimicrobial processes including growth prevention and reactive oxygen species (ROS) response regulation. Prevents general growth and development. The chain is Secreted transmembrane peptide 6 from Arabidopsis thaliana (Mouse-ear cress).